A 151-amino-acid polypeptide reads, in one-letter code: Superoxide dismutase [Cu-Zn] 2 (151 aa).

3 residues coordinate Cu cation: histidine 44, histidine 46, and histidine 61. Residues cysteine 55 and cysteine 144 are joined by a disulfide bond. 4 residues coordinate Zn(2+): histidine 61, histidine 69, histidine 78, and aspartate 81. Position 118 (histidine 118) interacts with Cu cation.

Belongs to the Cu-Zn superoxide dismutase family. As to quaternary structure, homodimer. The cofactor is Cu cation. It depends on Zn(2+) as a cofactor.

Its subcellular location is the cytoplasm. The enzyme catalyses 2 superoxide + 2 H(+) = H2O2 + O2. Destroys radicals which are normally produced within the cells and which are toxic to biological systems. In Zea mays (Maize), this protein is Superoxide dismutase [Cu-Zn] 2 (SODCC.1).